The following is a 166-amino-acid chain: Large ribosomal subunit protein uL10 (166 aa).

It belongs to the universal ribosomal protein uL10 family. Part of the ribosomal stalk of the 50S ribosomal subunit. The N-terminus interacts with L11 and the large rRNA to form the base of the stalk. The C-terminus forms an elongated spine to which L12 dimers bind in a sequential fashion forming a multimeric L10(L12)X complex.

Forms part of the ribosomal stalk, playing a central role in the interaction of the ribosome with GTP-bound translation factors. In Hydrogenovibrio crunogenus (strain DSM 25203 / XCL-2) (Thiomicrospira crunogena), this protein is Large ribosomal subunit protein uL10.